A 488-amino-acid chain; its full sequence is MSQSVESRTRIKSERYESGVIPYAKMGYWDADYVIKETDILALFRITPQPGVDPIEASAAIAGESSTATWTVVWTDLLTACDLYRAKAYRVDPVPNVADQYFAYIAYDIDLFEEGSIANLTASIIGNVFGFKAVKALRLEDMRMPVAYLKTFQGPATGLIVERERMDKFGRPFLGATVKPKLGLSGKNYGRVVYEGLKGGLDFLKDDENINSQPFMRWRERFLYSMEGVNKASASAGEIKGHYLNVTAATMEDMYERAEFSKEVGSIICMIDLVIGYTAIQSMAIWARKHDMILHLHRAGNSTYSRQKNHGMNFRVICKWMRMAGVDHIHAGTVVGKLEGDPLMIKGFYNTLLESETDINLPQGLFFAQNWASLRKVVPVASGGIHAGQMHQLLDYLGDDVVLQFGGGTIGHPDGIQAGATANKVALESMVMARNEGRNYVAKGPQILRDAAKTCGPLQTALDLWKDISFNYTSTDTADFVETPTANI.

Substrate contacts are provided by asparagine 127 and threonine 177. Residue lysine 179 is the Proton acceptor of the active site. Lysine 181 lines the substrate pocket. Positions 205, 207, and 208 each coordinate Mg(2+). Lysine 205 is subject to N6-carboxylysine. Histidine 297 (proton acceptor) is an active-site residue. Substrate is bound by residues arginine 298, histidine 330, and serine 382.

Belongs to the RuBisCO large chain family. Type I subfamily. In terms of assembly, heterohexadecamer of 8 large chains and 8 small chains. Mg(2+) is required as a cofactor.

It is found in the plastid. The protein localises to the chloroplast. The catalysed reaction is 2 (2R)-3-phosphoglycerate + 2 H(+) = D-ribulose 1,5-bisphosphate + CO2 + H2O. It catalyses the reaction D-ribulose 1,5-bisphosphate + O2 = 2-phosphoglycolate + (2R)-3-phosphoglycerate + 2 H(+). Functionally, ruBisCO catalyzes two reactions: the carboxylation of D-ribulose 1,5-bisphosphate, the primary event in carbon dioxide fixation, as well as the oxidative fragmentation of the pentose substrate in the photorespiration process. Both reactions occur simultaneously and in competition at the same active site. The polypeptide is Ribulose bisphosphate carboxylase large chain (Pyropia suborbiculata (Red alga)).